Consider the following 161-residue polypeptide: Nucleotide-binding protein Gmet_3206 (161 aa).

This sequence belongs to the YajQ family.

Its function is as follows. Nucleotide-binding protein. The protein is Nucleotide-binding protein Gmet_3206 of Geobacter metallireducens (strain ATCC 53774 / DSM 7210 / GS-15).